A 507-amino-acid polypeptide reads, in one-letter code: Probable bifunctional methylthioribulose-1-phosphate dehydratase/enolase-phosphatase E1 (507 aa).

Ala2 is modified (N-acetylalanine). A methylthioribulose-1-phosphate dehydratase region spans residues Ala2–Asp237. Residue Cys109 coordinates substrate. The Zn(2+) site is built by His127 and His129. The active-site Proton donor/acceptor is Glu152. His202 lines the Zn(2+) pocket. The segment at Ile268 to Ile507 is enolase-phosphatase E1. Mg(2+)-binding residues include Asp271 and Glu273. Substrate is bound by residues Ser406–Ser407 and Lys440. Asp466 provides a ligand contact to Mg(2+).

This sequence in the N-terminal section; belongs to the aldolase class II family. MtnB subfamily. The protein in the C-terminal section; belongs to the HAD-like hydrolase superfamily. MasA/MtnC family. Zn(2+) is required as a cofactor. The cofactor is Mg(2+).

It catalyses the reaction 5-(methylsulfanyl)-D-ribulose 1-phosphate = 5-methylsulfanyl-2,3-dioxopentyl phosphate + H2O. The catalysed reaction is 5-methylsulfanyl-2,3-dioxopentyl phosphate + H2O = 1,2-dihydroxy-5-(methylsulfanyl)pent-1-en-3-one + phosphate. Its pathway is amino-acid biosynthesis; L-methionine biosynthesis via salvage pathway; L-methionine from S-methyl-5-thio-alpha-D-ribose 1-phosphate: step 2/6. It participates in amino-acid biosynthesis; L-methionine biosynthesis via salvage pathway; L-methionine from S-methyl-5-thio-alpha-D-ribose 1-phosphate: step 3/6. The protein operates within amino-acid biosynthesis; L-methionine biosynthesis via salvage pathway; L-methionine from S-methyl-5-thio-alpha-D-ribose 1-phosphate: step 4/6. The polypeptide is Probable bifunctional methylthioribulose-1-phosphate dehydratase/enolase-phosphatase E1 (Arabidopsis thaliana (Mouse-ear cress)).